Consider the following 194-residue polypeptide: Fe/S biogenesis protein NfuA (194 aa).

[4Fe-4S] cluster is bound by residues cysteine 152 and cysteine 155.

The protein belongs to the NfuA family. Homodimer. [4Fe-4S] cluster is required as a cofactor.

In terms of biological role, involved in iron-sulfur cluster biogenesis. Binds a 4Fe-4S cluster, can transfer this cluster to apoproteins, and thereby intervenes in the maturation of Fe/S proteins. Could also act as a scaffold/chaperone for damaged Fe/S proteins. The protein is Fe/S biogenesis protein NfuA of Ectopseudomonas mendocina (strain ymp) (Pseudomonas mendocina).